A 217-amino-acid chain; its full sequence is Oxygen-evolving enhancer protein 3-1, chloroplastic (217 aa).

A chloroplast-targeting transit peptide spans 1-68 (MAQAMASMTG…GGALSQAARA (68 aa)).

It belongs to the PsbQ family.

Its subcellular location is the plastid. It is found in the chloroplast thylakoid membrane. This is Oxygen-evolving enhancer protein 3-1, chloroplastic (PSBQ1) from Zea mays (Maize).